The primary structure comprises 201 residues: Probable quinol oxidase subunit 3 (201 aa).

Helical transmembrane passes span 20 to 40, 62 to 82, 91 to 111, 133 to 153, and 172 to 192; these read LGFW…FATL, LVLI…IAIY, LMMF…GFEI, FFIL…WAIC, and FIVS…FTAV.

The protein belongs to the cytochrome c oxidase subunit 3 family.

Its subcellular location is the cell membrane. It catalyses the reaction 2 a quinol + O2 = 2 a quinone + 2 H2O. Its function is as follows. Catalyzes quinol oxidation with the concomitant reduction of oxygen to water. The chain is Probable quinol oxidase subunit 3 (qoxC) from Staphylococcus aureus (strain MSSA476).